We begin with the raw amino-acid sequence, 136 residues long: Protein PsiE (136 aa).

Helical transmembrane passes span 15 to 35, 55 to 75, 83 to 103, and 108 to 128; these read ILQNVLNLGLLTLGLILVVFL, YELVEGLVIYFLYFEFIALIV, HFPLRYFVYIGITAIVRLIIV, and PMDVLLYPAAILLLVITLWLC.

It belongs to the PsiE family.

It localises to the cell inner membrane. This chain is Protein PsiE, found in Salmonella gallinarum (strain 287/91 / NCTC 13346).